The chain runs to 448 residues: Probable glycine dehydrogenase (decarboxylating) subunit 1 (448 aa).

The protein belongs to the GcvP family. N-terminal subunit subfamily. The glycine cleavage system is composed of four proteins: P, T, L and H. In this organism, the P 'protein' is a heterodimer of two subunits.

The enzyme catalyses N(6)-[(R)-lipoyl]-L-lysyl-[glycine-cleavage complex H protein] + glycine + H(+) = N(6)-[(R)-S(8)-aminomethyldihydrolipoyl]-L-lysyl-[glycine-cleavage complex H protein] + CO2. The glycine cleavage system catalyzes the degradation of glycine. The P protein binds the alpha-amino group of glycine through its pyridoxal phosphate cofactor; CO(2) is released and the remaining methylamine moiety is then transferred to the lipoamide cofactor of the H protein. The sequence is that of Probable glycine dehydrogenase (decarboxylating) subunit 1 from Listeria innocua serovar 6a (strain ATCC BAA-680 / CLIP 11262).